The chain runs to 245 residues: 1-(5-phosphoribosyl)-5-[(5-phosphoribosylamino)methylideneamino] imidazole-4-carboxamide isomerase (245 aa).

Residue Asp-7 is the Proton acceptor of the active site. Asp-129 functions as the Proton donor in the catalytic mechanism.

It belongs to the HisA/HisF family.

The protein localises to the cytoplasm. It carries out the reaction 1-(5-phospho-beta-D-ribosyl)-5-[(5-phospho-beta-D-ribosylamino)methylideneamino]imidazole-4-carboxamide = 5-[(5-phospho-1-deoxy-D-ribulos-1-ylimino)methylamino]-1-(5-phospho-beta-D-ribosyl)imidazole-4-carboxamide. The protein operates within amino-acid biosynthesis; L-histidine biosynthesis; L-histidine from 5-phospho-alpha-D-ribose 1-diphosphate: step 4/9. The protein is 1-(5-phosphoribosyl)-5-[(5-phosphoribosylamino)methylideneamino] imidazole-4-carboxamide isomerase of Vibrio vulnificus (strain CMCP6).